The following is a 240-amino-acid chain: Probable transcriptional regulatory protein SO_3401 (240 aa).

Belongs to the TACO1 family.

The protein resides in the cytoplasm. The sequence is that of Probable transcriptional regulatory protein SO_3401 from Shewanella oneidensis (strain ATCC 700550 / JCM 31522 / CIP 106686 / LMG 19005 / NCIMB 14063 / MR-1).